The sequence spans 30 residues: Photosystem I reaction center subunit XII (30 aa).

Residues valine 7–serine 27 form a helical membrane-spanning segment.

It belongs to the PsaM family.

The protein localises to the plastid. Its subcellular location is the chloroplast thylakoid membrane. The protein is Photosystem I reaction center subunit XII of Cyanidium caldarium (Red alga).